A 106-amino-acid polypeptide reads, in one-letter code: Small ribosomal subunit protein uS17 (106 aa).

This sequence belongs to the universal ribosomal protein uS17 family. In terms of assembly, part of the 30S ribosomal subunit.

Functionally, one of the primary rRNA binding proteins, it binds specifically to the 5'-end of 16S ribosomal RNA. The protein is Small ribosomal subunit protein uS17 of Methanosphaera stadtmanae (strain ATCC 43021 / DSM 3091 / JCM 11832 / MCB-3).